A 439-amino-acid polypeptide reads, in one-letter code: Probable anion transporter 7 (439 aa).

A signal peptide spans 1 to 28 (MTALTRMKFPKRYVIVLLTFICTNVCYI). 11 helical membrane passes run 53-73 (MILS…GWAA), 81-101 (VLLL…LDPK), 104-124 (VILV…FPAI), 143-163 (LTTS…PSLV), 167-187 (GAQS…VIWL), 232-252 (IIFS…HYAL), 280-300 (LPYF…DHLI), 312-332 (KLLN…LPLF), 338-358 (TVLC…GFAV), 367-387 (FAGI…IVGV), and 412-432 (TVFF…LIFS).

This sequence belongs to the major facilitator superfamily. Sodium/anion cotransporter (TC 2.A.1.14) family.

It is found in the cell membrane. Probable anion transporter. The polypeptide is Probable anion transporter 7 (PHT4;7) (Oryza sativa subsp. japonica (Rice)).